A 231-amino-acid polypeptide reads, in one-letter code: CLAVATA3/ESR (CLE)-related protein 4B-1 (231 aa).

An N-terminal signal peptide occupies residues Met-1 to Ala-21. Residues Ala-21–Met-83 are required for secretion from the host cytoplasm to the host apoplasm. N-linked (GlcNAc...) asparagine glycosylation is present at Asn-32. The tract at residues Arg-116 to His-231 is disordered. Composition is skewed to basic and acidic residues over residues His-125 to Val-137 and Pro-144 to Gly-221. The A-1 repeat unit spans residues Glu-127 to Lys-135. The tract at residues Glu-127–Lys-219 is 5 X approximate repeat A. The CLE-1 repeat unit spans residues Arg-136–His-147. Positions Arg-136–His-231 are 5 X approximate repeat CLE. One copy of the A-2 repeat lies at Gln-148 to Lys-156. The stretch at Arg-157–His-168 is one CLE-2 repeat. The stretch at Glu-169–Lys-177 is one A-3 repeat. The stretch at Arg-178–His-189 is one CLE-3 repeat. Residues Glu-190 to Lys-198 form an A-4 repeat. The stretch at Arg-199 to His-210 is one CLE-4 repeat. One copy of the A-5 repeat lies at Glu-211 to Lys-219. A CLE-5 repeat occupies Arg-220 to His-231.

Belongs to the CLV3/ESR signal peptide family. Highly expressed exclusively within the dorsal esophageal gland cell during syncytium formation in host plants.

Its subcellular location is the secreted. It is found in the host cytoplasm. The protein resides in the host extracellular space. The protein localises to the extracellular space. It localises to the apoplast. Mimics host plant CLE extracellular signal peptides that regulate cell fate. May play a role in the differentiation or division of feeding cells (syncytia) induced in plant roots during infection. The sequence is that of CLAVATA3/ESR (CLE)-related protein 4B-1 (CLE-4B-1) from Globodera rostochiensis (Golden nematode worm).